The sequence spans 61 residues: Temporin-SN3 (61 aa).

Positions 1–22 (MFTLKKTLLLLFFLGTINLSLC) are cleaved as a signal peptide. The propeptide at 23-44 (EEERNAEEERRDGDDEMDVEVK) is removed in mature form. A Lysine amide modification is found at Lys-61.

Belongs to the frog skin active peptide (FSAP) family. Temporin subfamily. Expressed by the skin glands.

It localises to the secreted. In terms of biological role, antimicrobial peptide. Active against some Gram-positive and Gram-negative bacterial strains. Active against fungus C.glabrata 090902 but not against C.albicans ATCC 12231. Shows weak hemolytic activity against human erythrocytes. This Sylvirana spinulosa (Fine-spined frog) protein is Temporin-SN3.